A 149-amino-acid polypeptide reads, in one-letter code: Calmodulin (149 aa).

Residue alanine 2 is modified to N-acetylalanine. EF-hand domains follow at residues 8 to 43 (EQIS…LGQN), 44 to 79 (PTEA…KMRD), 81 to 116 (DSEE…LGEK), and 117 to 149 (LTDN…MLSK). Ca(2+) contacts are provided by aspartate 21, aspartate 23, aspartate 25, threonine 27, glutamate 32, aspartate 57, aspartate 59, asparagine 61, threonine 63, glutamate 68, aspartate 94, aspartate 96, asparagine 98, tyrosine 100, glutamate 105, aspartate 130, aspartate 132, aspartate 134, glutamine 136, and glutamate 141.

The protein belongs to the calmodulin family.

In terms of biological role, calmodulin mediates the control of a large number of enzymes, ion channels and other proteins by Ca(2+). Among the enzymes to be stimulated by the calmodulin-Ca(2+) complex are a number of protein kinases and phosphatases. This Pleurotus ostreatus (Oyster mushroom) protein is Calmodulin (CMD1).